Reading from the N-terminus, the 84-residue chain is RQC P-site tRNA stabilizing factor (84 aa).

The region spanning 1–64 (MRIDKFLQSV…IEEYTILQIP (64 aa)) is the S4 RNA-binding domain.

The protein belongs to the RqcP family. As to quaternary structure, associates with stalled 50S ribosomal subunits. Binds to RqcH, 23S rRNA and the P-site tRNA. Does not require RqcH for association with 50S subunits.

Its function is as follows. Key component of the ribosome quality control system (RQC), a ribosome-associated complex that mediates the extraction of incompletely synthesized nascent chains from stalled ribosomes and their subsequent degradation. RqcH recruits Ala-charged tRNA, and with RqcP directs the elongation of stalled nascent chains on 50S ribosomal subunits, leading to non-templated C-terminal alanine extensions (Ala tail). The Ala tail promotes nascent chain degradation. RqcP is associated with the translocation-like movement of the peptidyl-tRNA from the A-site into the P-site. The polypeptide is RQC P-site tRNA stabilizing factor (Helicobacter pylori (strain ATCC 700392 / 26695) (Campylobacter pylori)).